The following is a 92-amino-acid chain: DNA/RNA-binding protein Alba (92 aa).

Lysine 11 is subject to N6-acetyllysine.

It belongs to the histone-like Alba family. Acetylated. Acetylation at Lys-11 decreases DNA-binding affinity.

Its subcellular location is the cytoplasm. It is found in the chromosome. Binds double-stranded DNA tightly but without sequence specificity. Involved in DNA compaction. This is DNA/RNA-binding protein Alba from Pyrobaculum calidifontis (strain DSM 21063 / JCM 11548 / VA1).